The chain runs to 82 residues: ATP synthase subunit c (82 aa).

2 helical membrane-spanning segments follow: residues 7–27 and 57–77; these read AASV…PGIG and LAFM…LLFA.

This sequence belongs to the ATPase C chain family. In terms of assembly, F-type ATPases have 2 components, F(1) - the catalytic core - and F(0) - the membrane proton channel. F(1) has five subunits: alpha(3), beta(3), gamma(1), delta(1), epsilon(1). F(0) has four main subunits: a(1), b(1), b'(1) and c(10-14). The alpha and beta chains form an alternating ring which encloses part of the gamma chain. F(1) is attached to F(0) by a central stalk formed by the gamma and epsilon chains, while a peripheral stalk is formed by the delta, b and b' chains.

It localises to the cellular thylakoid membrane. Functionally, f(1)F(0) ATP synthase produces ATP from ADP in the presence of a proton or sodium gradient. F-type ATPases consist of two structural domains, F(1) containing the extramembraneous catalytic core and F(0) containing the membrane proton channel, linked together by a central stalk and a peripheral stalk. During catalysis, ATP synthesis in the catalytic domain of F(1) is coupled via a rotary mechanism of the central stalk subunits to proton translocation. Its function is as follows. Key component of the F(0) channel; it plays a direct role in translocation across the membrane. A homomeric c-ring of between 10-14 subunits forms the central stalk rotor element with the F(1) delta and epsilon subunits. The sequence is that of ATP synthase subunit c from Synechococcus sp. (strain RCC307).